The following is a 202-amino-acid chain: Large ribosomal subunit protein bL25 (202 aa).

The disordered stretch occupies residues 1–21; the sequence is MSKESYELKAEARERVGKGSS.

This sequence belongs to the bacterial ribosomal protein bL25 family. CTC subfamily. In terms of assembly, part of the 50S ribosomal subunit; part of the 5S rRNA/L5/L18/L25 subcomplex. Contacts the 5S rRNA. Binds to the 5S rRNA independently of L5 and L18.

This is one of the proteins that binds to the 5S RNA in the ribosome where it forms part of the central protuberance. This Agrobacterium fabrum (strain C58 / ATCC 33970) (Agrobacterium tumefaciens (strain C58)) protein is Large ribosomal subunit protein bL25.